The chain runs to 84 residues: ATP synthase subunit c (84 aa).

The next 2 membrane-spanning stretches (helical) occupy residues 9–29 and 54–74; these read IIGASILLAFAALGTAIGFAI and IVAGLLDAIAMIAVGISLLFI.

Belongs to the ATPase C chain family. In terms of assembly, F-type ATPases have 2 components, F(1) - the catalytic core - and F(0) - the membrane proton channel. F(1) has five subunits: alpha(3), beta(3), gamma(1), delta(1), epsilon(1). F(0) has three main subunits: a(1), b(2) and c(10-14). The alpha and beta chains form an alternating ring which encloses part of the gamma chain. F(1) is attached to F(0) by a central stalk formed by the gamma and epsilon chains, while a peripheral stalk is formed by the delta and b chains.

It localises to the cell inner membrane. Its function is as follows. F(1)F(0) ATP synthase produces ATP from ADP in the presence of a proton or sodium gradient. F-type ATPases consist of two structural domains, F(1) containing the extramembraneous catalytic core and F(0) containing the membrane proton channel, linked together by a central stalk and a peripheral stalk. During catalysis, ATP synthesis in the catalytic domain of F(1) is coupled via a rotary mechanism of the central stalk subunits to proton translocation. Key component of the F(0) channel; it plays a direct role in translocation across the membrane. A homomeric c-ring of between 10-14 subunits forms the central stalk rotor element with the F(1) delta and epsilon subunits. This Glaesserella parasuis serovar 5 (strain SH0165) (Haemophilus parasuis) protein is ATP synthase subunit c.